Reading from the N-terminus, the 390-residue chain is Peroxisomal sarcosine oxidase (390 aa).

9–39 contributes to the FAD binding site; the sequence is DAIVIGAGIQGCFTAYHLAKHRKRILLLEQF. Lys126 carries the post-translational modification N6-acetyllysine. Position 319 is an S-8alpha-FAD cysteine (Cys319). A Microbody targeting signal motif is present at residues 388–390; sequence AHL.

It belongs to the MSOX/MTOX family. The cofactor is FAD. In terms of tissue distribution, expressed in the liver and kidney.

It is found in the peroxisome. The enzyme catalyses sarcosine + O2 + H2O = formaldehyde + glycine + H2O2. It catalyses the reaction L-pipecolate + O2 = L-1-piperideine-6-carboxylate + H2O2 + H(+). Functionally, metabolizes sarcosine and L-pipecolic acid. This chain is Peroxisomal sarcosine oxidase (PIPOX), found in Homo sapiens (Human).